The primary structure comprises 74 residues: ATP synthase subunit c (74 aa).

2 consecutive transmembrane segments (helical) span residues 13–33 and 51–71; these read ISVIALAGVGLGIGNIFASLI and ILGFALTEAVALFALLIAFLI.

Belongs to the ATPase C chain family. As to quaternary structure, F-type ATPases have 2 components, F(1) - the catalytic core - and F(0) - the membrane proton channel. F(1) has five subunits: alpha(3), beta(3), gamma(1), delta(1), epsilon(1). F(0) has three main subunits: a(1), b(2) and c(10-14). The alpha and beta chains form an alternating ring which encloses part of the gamma chain. F(1) is attached to F(0) by a central stalk formed by the gamma and epsilon chains, while a peripheral stalk is formed by the delta and b chains.

The protein localises to the cell inner membrane. Functionally, f(1)F(0) ATP synthase produces ATP from ADP in the presence of a proton or sodium gradient. F-type ATPases consist of two structural domains, F(1) containing the extramembraneous catalytic core and F(0) containing the membrane proton channel, linked together by a central stalk and a peripheral stalk. During catalysis, ATP synthesis in the catalytic domain of F(1) is coupled via a rotary mechanism of the central stalk subunits to proton translocation. Key component of the F(0) channel; it plays a direct role in translocation across the membrane. A homomeric c-ring of between 10-14 subunits forms the central stalk rotor element with the F(1) delta and epsilon subunits. This Granulibacter bethesdensis (strain ATCC BAA-1260 / CGDNIH1) protein is ATP synthase subunit c.